The following is a 171-amino-acid chain: Cardioactive peptide (171 aa).

The first 26 residues, M1–C26, serve as a signal peptide directing secretion. The propeptide occupies D27 to R49. A disulfide bridge connects residues C54 and C60. At C60 the chain carries Cysteine amide. A propeptide spanning residues R64–R171 is cleaved from the precursor. Residues Q116–R171 are disordered.

As to expression, central nervous system; most neurons exhibit coexpression with burs.

The protein localises to the secreted. Cardioregulatory neurohormone that increases heart beat rate during adult wing inflation; has no effect on beat amplitude. The effect of CCAP is both ino- and chronotropic. This Periplaneta americana (American cockroach) protein is Cardioactive peptide.